The chain runs to 452 residues: Phosphoglucosamine mutase (452 aa).

Residue Ser101 is the Phosphoserine intermediate of the active site. Ser101, Asp241, Asp243, and Asp245 together coordinate Mg(2+). Ser101 is subject to Phosphoserine.

The protein belongs to the phosphohexose mutase family. It depends on Mg(2+) as a cofactor. Post-translationally, activated by phosphorylation.

It carries out the reaction alpha-D-glucosamine 1-phosphate = D-glucosamine 6-phosphate. In terms of biological role, catalyzes the conversion of glucosamine-6-phosphate to glucosamine-1-phosphate. The protein is Phosphoglucosamine mutase of Lactococcus lactis subsp. cremoris (strain SK11).